Reading from the N-terminus, the 430-residue chain is Elongation factor 1-alpha (430 aa).

Positions 7–219 (KPHVNIVFIG…DQIPEPEKPV (213 aa)) constitute a tr-type G domain. A G1 region spans residues 16–23 (GHVDHGKS). 16-23 (GHVDHGKS) contributes to the GTP binding site. Mg(2+) is bound at residue Ser-23. The interval 70–74 (GITID) is G2. Positions 91-94 (DAPG) are G3. GTP is bound by residues 91-95 (DAPGH) and 146-149 (NKMD). The tract at residues 146–149 (NKMD) is G4. Residues 183 to 185 (SAW) are G5.

The protein belongs to the TRAFAC class translation factor GTPase superfamily. Classic translation factor GTPase family. EF-Tu/EF-1A subfamily.

Its subcellular location is the cytoplasm. The catalysed reaction is GTP + H2O = GDP + phosphate + H(+). Functionally, GTP hydrolase that promotes the GTP-dependent binding of aminoacyl-tRNA to the A-site of ribosomes during protein biosynthesis. The chain is Elongation factor 1-alpha from Pyrococcus woesei.